The following is an 806-amino-acid chain: Volume-regulated anion channel subunit LRRC8E (806 aa).

The Cytoplasmic portion of the chain corresponds to 1–22; sequence MIPVAEFKQFTEQQPAFKVLKP. A helical membrane pass occupies residues 23–43; the sequence is WWDVLAEYITYAMLMIGVFGC. The Extracellular segment spans residues 44-130; it reads TLQVTQDKII…YETALHWYAK (87 aa). Cys-54 and Cys-311 are oxidised to a cystine. N-linked (GlcNAc...) asparagine glycosylation is found at Asn-57 and Asn-80. A compositionally biased stretch (polar residues) spans 72 to 81; the sequence is YDQQSPPSND. Positions 72 to 103 are disordered; the sequence is YDQQSPPSNDSDLETTIPPPTATSSPPREMSG. A helical membrane pass occupies residues 131 to 151; the sequence is YFPYLVVIHTLIFIICGNFWF. At 152-275 the chain is on the cytoplasmic side; that stretch reads KFPGTSSKIE…MRQTVLKVCK (124 aa). Residues 182–213 are disordered; sequence EVSGESSQEKPSQERSIDRELSKPNFEEGSPA. Residues 188–207 show a composition bias toward basic and acidic residues; that stretch reads SQEKPSQERSIDRELSKPNF. A helical membrane pass occupies residues 276–296; it reads FVLITIYNAVLVGKIHFIVPC. The Extracellular segment spans residues 297 to 323; the sequence is SVHTEDMTGYNSFCCNHTKAHLFSKLA. The N-linked (GlcNAc...) asparagine glycan is linked to Asn-312. A helical membrane pass occupies residues 324-344; it reads ITYLCFLGVYGLTCLYTLYWL. The Cytoplasmic portion of the chain corresponds to 345-806; sequence FRRPLKEYSF…VEVRDKLKED (462 aa). LRR repeat units lie at residues 544–566, 569–589, 593–614, 616–637, 641–662, 664–685, 687–708, 710–731, 733–754, and 756–777; these read LKSL…VADV, HLQK…NALK, LVKE…VFSL, NLQV…ISLQ, KLSV…IRKL, GLEE…LFLC, KLRH…IGVL, LLQY…LFFC, KLKT…VGSL, and CLVK…LGNC.

Belongs to the LRRC8 family. Heterohexamer; oligomerizes with other LRRC8 proteins (lrrc8a, lrrc8c, lrrc8d and/or lrrc8b) to form a heterohexamer. Detected in a channel complex that contains lrrc8a, lrrc8c and lrrc8e. In vivo, the subunit composition may depend primarily on expression levels, and heterooligomeric channels containing various proportions of the different LRRC8 proteins may coexist.

It is found in the cell membrane. The protein localises to the endoplasmic reticulum membrane. It localises to the lysosome membrane. It catalyses the reaction chloride(in) = chloride(out). The enzyme catalyses iodide(out) = iodide(in). The catalysed reaction is taurine(out) = taurine(in). It carries out the reaction 2',3'-cGAMP(out) = 2',3'-cGAMP(in). Non-essential component of the volume-regulated anion channel (VRAC, also named VSOAC channel), an anion channel required to maintain a constant cell volume in response to extracellular or intracellular osmotic changes. The VRAC channel conducts iodide better than chloride and can also conduct organic osmolytes like taurine. Mediates efflux of amino acids, such as aspartate, in response to osmotic stress. The VRAC channel also mediates transport of immunoreactive cyclic dinucleotide GMP-AMP (2'-3'-cGAMP), an immune messenger produced in response to DNA virus in the cytosol. Channel activity requires lrrc8a plus at least one other family member (lrrc8b, lrrc8c, lrrc8d or lrrc8e); channel characteristics depend on the precise subunit composition. Also plays a role in lysosome homeostasis by forming functional lysosomal VRAC channels in response to low cytoplasmic ionic strength condition: lysosomal VRAC channels are necessary for the formation of large lysosome-derived vacuoles, which store and then expel excess water to maintain cytosolic water homeostasis. This chain is Volume-regulated anion channel subunit LRRC8E, found in Xenopus tropicalis (Western clawed frog).